The chain runs to 846 residues: MFLHSPALLIWLFLFCLAGPQAVRTEPYNSTSSSSSPTANDVTSSDLLLLASEETPTRAPKPVTKQGKKNVVKVKKGGNGTVDDSPWVTDCSEPLNKDISCSVNIIGCSDNVFKYVDAGQEPPRAHDVRIAPTTKVMGANRIDKRKHRLHVDVSWQIPQLEASTHLKAFKLIVNGPDGKNTCFVFNVTQTHVDDEGISPRYRFSSNTLFDFGHNYTVTIVSLPMSRKRAPKVSATSLMPDDPDAAPVKIVKTNEQMCEGKSNPQASKWAASFRKIFLFSAIRLIQIEFLAAPPQYCFEEYEVRLLDSSGIVMLQSAIITKDELRTEIINGRPVQFGEFNFTDIELDTDLIPSVIPIESAHDGRCLCVTENGCSCLAADWKPVKLTRIEKPPATSNQTEESDGKAEKDKKEDTTWTWHTYAITGGAIIAILFILSVCAGLKCYKKFNNKKKASNIHLLNENPAFSHSGSIPLILKQSISVLIVYSHDSAQHEAAVLAFAELLRDVFNLNVHLDVWDEDDIEENRAEYINSSIVRANKVIIINSIGAYFRTVFRHQREPAIERITTGRNDVIFDMQCELALQHPCVISCHFSYTNPKYVFFPINRLLQYSIPNSLMTMTTALTEQPARPEQLAGFNQVFARLQAAISRKLNYIESDPQWFENTHHRVATRRVSELEAHNIVPLPPSLEVKVEDEDAFGQMETLPIDELKEKFAAKRDLEVEVLDSEDVKLLEDVKCAPGPIHVEPTEPEVLEPAEEPMEEAEEDEEDEDDVDSVEGQTARIEELQRLIVHKDMNHDSGNLDSAYVSGSDFSADIHNEILDKPRLNAEMDLRKANREDSAFHDEVIGIH.

Residues 1–25 (MFLHSPALLIWLFLFCLAGPQAVRT) form the signal peptide. Residues 26-418 (EPYNSTSSSS…KEDTTWTWHT (393 aa)) lie on the Extracellular side of the membrane. Residues N29, N79, N186, N214, N339, and N395 are each glycosylated (N-linked (GlcNAc...) asparagine). The disordered stretch occupies residues 388–409 (EKPPATSNQTEESDGKAEKDKK). Positions 400–409 (SDGKAEKDKK) are enriched in basic and acidic residues. Residues 419 to 439 (YAITGGAIIAILFILSVCAGL) traverse the membrane as a helical segment. The Cytoplasmic segment spans residues 440-846 (KCYKKFNNKK…AFHDEVIGIH (407 aa)). In terms of domain architecture, SEFIR spans 476 to 618 (SISVLIVYSH…IPNSLMTMTT (143 aa)). A disordered region spans residues 737-771 (GPIHVEPTEPEVLEPAEEPMEEAEEDEEDEDDVDS). Residues 744 to 771 (TEPEVLEPAEEPMEEAEEDEEDEDDVDS) show a composition bias toward acidic residues.

As to quaternary structure, component of a heterodimeric receptor complex composed of ilcr-1 and ilcr-2. The receptor complex interacts with actl-1 and ilc-17.1 with the interaction being mediated by ilcr-2. As to expression, expressed in most neurons.

It localises to the cell membrane. Its function is as follows. Forms a receptor complex together with receptor ilcr-2, which upon activation acts as a modulator of neuronal activity. Binding of the ligand ilc-17.1 to the ilcr-1/2 receptor complex triggers a signaling cascade that activates the downstream signaling components actl-1, pik-1 and nfki-1, and results in increased neuronal activity in RMG interneurons in response to input from oxygen-sensing neurons. This leads to increased animal movement and promotes aggregation behavior. The protein is Interleukin cytokine receptor-related protein 1 of Caenorhabditis elegans.